The primary structure comprises 264 residues: MSKVTSSTLLKYKQEGRKFTALTAYDASFASAFDGEGIDVLLVGDSLGMVLQGHDDTLPVTTAEIAYHTRCVRRGIERSLLIADMPFMSYATPEQAMENATALMQAGANMVKLEGGHWLLETVTKLTERGIPVCAHLGLTPQSVHVFGGFKVQGRDAENAQRILDEAKALEAAGAQLLVVECIPESLATAITQALTIPVIGIGAGATTDGQILVMHDVLGISSGYIPRFSKNYLKQTGEIRSAVRAYIEEVANGTFPSSEHTFS.

Residues Asp45 and Asp84 each contribute to the Mg(2+) site. Residues Asp45–Ser46, Asp84, and Lys112 each bind 3-methyl-2-oxobutanoate. Mg(2+) is bound at residue Glu114. The active-site Proton acceptor is the Glu181.

Belongs to the PanB family. As to quaternary structure, homodecamer; pentamer of dimers. The cofactor is Mg(2+).

It localises to the cytoplasm. It catalyses the reaction 3-methyl-2-oxobutanoate + (6R)-5,10-methylene-5,6,7,8-tetrahydrofolate + H2O = 2-dehydropantoate + (6S)-5,6,7,8-tetrahydrofolate. The protein operates within cofactor biosynthesis; (R)-pantothenate biosynthesis; (R)-pantoate from 3-methyl-2-oxobutanoate: step 1/2. In terms of biological role, catalyzes the reversible reaction in which hydroxymethyl group from 5,10-methylenetetrahydrofolate is transferred onto alpha-ketoisovalerate to form ketopantoate. The protein is 3-methyl-2-oxobutanoate hydroxymethyltransferase of Shewanella sp. (strain MR-7).